The sequence spans 196 residues: Holliday junction branch migration complex subunit RuvA (196 aa).

Residues 1-63 form a domain I region; it reads MINKIHGKVI…ENELKLFGFL (63 aa). Positions 64 to 139 are domain II; it reads NSDERETFKS…KLLINNELES (76 aa). Residue Ser-139 is a region of interest, flexible linker. The domain III stretch occupies residues 139-196; the sequence is SSLFGFKELEESIVSMGFDRKIVNSKLKEACDLIEFSNLKDSEKEQFLFKEVLKRMSN.

Belongs to the RuvA family. Homotetramer. Forms an RuvA(8)-RuvB(12)-Holliday junction (HJ) complex. HJ DNA is sandwiched between 2 RuvA tetramers; dsDNA enters through RuvA and exits via RuvB. An RuvB hexamer assembles on each DNA strand where it exits the tetramer. Each RuvB hexamer is contacted by two RuvA subunits (via domain III) on 2 adjacent RuvB subunits; this complex drives branch migration. In the full resolvosome a probable DNA-RuvA(4)-RuvB(12)-RuvC(2) complex forms which resolves the HJ.

It localises to the cytoplasm. Functionally, the RuvA-RuvB-RuvC complex processes Holliday junction (HJ) DNA during genetic recombination and DNA repair, while the RuvA-RuvB complex plays an important role in the rescue of blocked DNA replication forks via replication fork reversal (RFR). RuvA specifically binds to HJ cruciform DNA, conferring on it an open structure. The RuvB hexamer acts as an ATP-dependent pump, pulling dsDNA into and through the RuvAB complex. HJ branch migration allows RuvC to scan DNA until it finds its consensus sequence, where it cleaves and resolves the cruciform DNA. The polypeptide is Holliday junction branch migration complex subunit RuvA (Borrelia garinii subsp. bavariensis (strain ATCC BAA-2496 / DSM 23469 / PBi) (Borreliella bavariensis)).